The following is a 206-amino-acid chain: Shieldin complex subunit 1 (206 aa).

Positions 27–94 (SSYEASQRVS…GQLETNEEED (68 aa)) are disordered. Low complexity predominate over residues 32–55 (SQRVSQGSSNSLSSLESHPFLSSS). A compositionally biased stretch (polar residues) spans 56–74 (TTDPDSNSLNTEQKGSWDS).

Component of the shieldin complex, consisting of SHLD1, SHLD2, SHLD3 and MAD2L2/REV7. Within the complex, SHLD2 forms a scaffold which interacts with a SHLD3-MAD2L2 subcomplex via its N-terminus, and with SHLD1 via its C-terminus. Interacts with ASTE1.

Its subcellular location is the chromosome. Functionally, component of the shieldin complex, which plays an important role in repair of DNA double-stranded breaks (DSBs). During G1 and S phase of the cell cycle, the complex functions downstream of TP53BP1 to promote non-homologous end joining (NHEJ) and suppress DNA end resection. Mediates various NHEJ-dependent processes including immunoglobulin class-switch recombination, and fusion of unprotected telomeres. The sequence is that of Shieldin complex subunit 1 from Mus musculus (Mouse).